The sequence spans 269 residues: Phosphonoacetaldehyde hydrolase (269 aa).

Residue aspartate 10 is the Nucleophile of the active site. 2 residues coordinate Mg(2+): aspartate 10 and alanine 12. The active-site Schiff-base intermediate with substrate is lysine 52. Residue aspartate 186 coordinates Mg(2+).

It belongs to the HAD-like hydrolase superfamily. PhnX family. Homodimer. Mg(2+) serves as cofactor.

The enzyme catalyses phosphonoacetaldehyde + H2O = acetaldehyde + phosphate + H(+). Involved in phosphonate degradation. This chain is Phosphonoacetaldehyde hydrolase (phnX), found in Salmonella typhimurium (strain LT2 / SGSC1412 / ATCC 700720).